We begin with the raw amino-acid sequence, 466 residues long: Arginine biosynthesis bifunctional protein ArgJ, mitochondrial (466 aa).

6 residues coordinate substrate: Thr194, Lys223, Thr234, Glu321, Asn461, and Thr466. Residue Thr234 is the Nucleophile of the active site.

Belongs to the ArgJ family. Heterodimer of an alpha and a beta chain. The alpha and beta chains are autoproteolytically processed from a single precursor protein within the mitochondrion.

It is found in the mitochondrion matrix. It carries out the reaction N(2)-acetyl-L-ornithine + L-glutamate = N-acetyl-L-glutamate + L-ornithine. It catalyses the reaction L-glutamate + acetyl-CoA = N-acetyl-L-glutamate + CoA + H(+). The protein operates within amino-acid biosynthesis; L-arginine biosynthesis; L-ornithine and N-acetyl-L-glutamate from L-glutamate and N(2)-acetyl-L-ornithine (cyclic): step 1/1. Its pathway is amino-acid biosynthesis; L-arginine biosynthesis; N(2)-acetyl-L-ornithine from L-glutamate: step 1/4. Functionally, catalyzes two activities which are involved in the cyclic version of arginine biosynthesis: the synthesis of acetylglutamate from glutamate and acetyl-CoA, and of ornithine by transacetylation between acetylornithine and glutamate. The protein is Arginine biosynthesis bifunctional protein ArgJ, mitochondrial of Aspergillus flavus (strain ATCC 200026 / FGSC A1120 / IAM 13836 / NRRL 3357 / JCM 12722 / SRRC 167).